Consider the following 371-residue polypeptide: GPI mannosyltransferase 1 (371 aa).

A run of 8 helical transmembrane segments spans residues 64–84 (FPSWGKYLFSISDLIAGWLMI), 120–140 (AILGILSIALLYLIEKKSVWL), 144–164 (ILGFSVHFKIYPFMYGIAFLV), 190–210 (IVVGSLFMFTICNLLMYYLYG), 248–268 (ASSLFAFLPQLSLCMLIPLVF), 290–310 (VCTSQYFMWYLVFLPLVLPNS), 318–338 (LICLSLWIIGQLLWLISAYNL), and 344–364 (SVFIPLWLSGLLFFFFNVYEL).

Belongs to the PIGM family.

The protein localises to the endoplasmic reticulum membrane. Its pathway is glycolipid biosynthesis; glycosylphosphatidylinositol-anchor biosynthesis. Functionally, mannosyltransferase involved in glycosylphosphatidylinositol-anchor biosynthesis. Transfers the first alpha-1,4-mannose to GlcN-acyl-PI during GPI precursor assembly. Required for cell wall integrity. In Schizosaccharomyces pombe (strain 972 / ATCC 24843) (Fission yeast), this protein is GPI mannosyltransferase 1 (gpi14).